The primary structure comprises 463 residues: T-box transcription factor TBX1-B (463 aa).

2 disordered regions span residues Ser39–Ala58 and Gly75–Lys102. A compositionally biased stretch (low complexity) spans Gly75–Gly96. Residues Leu119–Asp297 constitute a DNA-binding region (T-box). 2 disordered regions span residues Arg320 to Tyr343 and Ser367 to Pro406. Residues Asn323–Gly332 are compositionally biased toward polar residues. A compositionally biased stretch (basic and acidic residues) spans Ser333–Tyr343. The span at Ser367–Ser380 shows a compositional bias: low complexity. Residues Lys420–Ile431 carry the Nuclear localization signal motif.

As to quaternary structure, binds DNA as a dimer. Interacts with dscr6/ripply3.

The protein localises to the nucleus. Probable transcriptional regulator involved in developmental processes. Binds to the palindromic T site 5'-TTCACACCTAGGTGTGAA-3' DNA sequence. Induces pre-placodal ectoderm (PPE) gene expression in regions where RIPPLY3 is absent. Plays a role in the formation of the anteroposterior (AP) axis during embryonic development; required to establish the posterolateral border of the pre-placodal ectoderm (PPE) acting downstream of the retinoic acid receptor (RAR) signaling. In terms of biological role, probable transcriptional regulator involved in developmental processes. Binds to the palindromic T site 5'-TTCACACCTAGGTGTGAA-3' DNA sequence. Is required for normal development of the pharyngeal arch arteries. This is T-box transcription factor TBX1-B (tbx1-b) from Xenopus laevis (African clawed frog).